The chain runs to 325 residues: H-2 class I histocompatibility antigen, Q10 alpha chain (325 aa).

The first 24 residues, 1 to 24 (MGAMAPRTLLLLLAAALAPTQTQA), serve as a signal peptide directing secretion. Positions 25–114 (GSHSMRYFET…LLGYYNQSES (90 aa)) are alpha-1. Over 25-310 (GSHSMRYFET…PPSTDSIMSH (286 aa)) the chain is Extracellular. The N-linked (GlcNAc...) asparagine glycan is linked to Asn-110. Residues 115–206 (GSHTIQWMYG…ELGKETLLRT (92 aa)) are alpha-2. 2 cysteine pairs are disulfide-bonded: Cys-125–Cys-188 and Cys-227–Cys-283. The tract at residues 207–298 (DPPKTHVTHH…GLPEPLTLRW (92 aa)) is alpha-3. The region spanning 209–297 (PKTHVTHHPG…EGLPEPLTLR (89 aa)) is the Ig-like C1-type domain. Residue Asn-280 is glycosylated (N-linked (GlcNAc...) asparagine). Positions 299 to 310 (EPPPSTDSIMSH) are connecting peptide. A helical membrane pass occupies residues 311–324 (IADLLWPSLKLWWY).

This sequence belongs to the MHC class I family. In terms of assembly, heterodimer of an alpha chain and a beta chain (beta-2-microglobulin).

Its subcellular location is the membrane. In terms of biological role, involved in the presentation of foreign antigens to the immune system. The chain is H-2 class I histocompatibility antigen, Q10 alpha chain (H2-Q10) from Mus musculus (Mouse).